A 24-amino-acid chain; its full sequence is Unknown protein 3 (24 aa).

The protein is Unknown protein 3 of Pseudotsuga menziesii (Douglas-fir).